Consider the following 378-residue polypeptide: Glutamate 5-kinase (378 aa).

Residue Lys19 coordinates ATP. 3 residues coordinate substrate: Ser59, Asp146, and Asn158. Position 178–179 (178–179 (TD)) interacts with ATP. One can recognise a PUA domain in the interval 285–363 (RGSVAVDAGA…SEFERLLGYT (79 aa)).

Belongs to the glutamate 5-kinase family.

It is found in the cytoplasm. The enzyme catalyses L-glutamate + ATP = L-glutamyl 5-phosphate + ADP. It participates in amino-acid biosynthesis; L-proline biosynthesis; L-glutamate 5-semialdehyde from L-glutamate: step 1/2. Its function is as follows. Catalyzes the transfer of a phosphate group to glutamate to form L-glutamate 5-phosphate. The sequence is that of Glutamate 5-kinase from Polaromonas sp. (strain JS666 / ATCC BAA-500).